The following is a 247-amino-acid chain: MSRKFCVGGNWKMNGDQKSIAEIAKTLSSAALDPNTEVVIGCPAIYLMYARNLLPCELGLAGQNAYKVAKGAFTGEISPAMLKDIGADWVILGHSERRAIFGESDALIAEKAEHALAEGLKVIACIGETLEEREAGKTNEVVARQMCAYAQKIKDWKNVVVAYEPVWAIGTGQTATPDQAQEVHAFLRQWLSDNISKEVSASLRIQYGGSVTAANAKELAKKPDIDGFLVGGASLKPEFVDIINARQ.

2 residues coordinate substrate: asparagine 10 and lysine 12. Residue histidine 94 is the Electrophile of the active site. Glutamate 164 functions as the Proton acceptor in the catalytic mechanism.

Belongs to the triosephosphate isomerase family. In terms of assembly, homodimer.

The enzyme catalyses D-glyceraldehyde 3-phosphate = dihydroxyacetone phosphate. It functions in the pathway carbohydrate biosynthesis; gluconeogenesis. The protein operates within carbohydrate degradation; glycolysis; D-glyceraldehyde 3-phosphate from glycerone phosphate: step 1/1. This Drosophila melanogaster (Fruit fly) protein is Triosephosphate isomerase (Tpi).